The following is a 654-amino-acid chain: Protein fem-1 homolog A-A (654 aa).

ANK repeat units lie at residues 2-31, 40-70, 82-111, 115-145, 149-178, 182-211, and 214-243; these read DLHTAVYNAAHDGKLPLLQKLLAGRGREEL, GGGTPLLIAARRGHLDVVEYLVDHCGASVEA, EGAPPLWAASAAGHLAVVRSLLRRGASVNR, TNSTPLRAACFDGHLDVVRYLVGEHKADLEV, HGHTCLMISCYKGHREIARYLLERGAQVNR, KGNTALHDCAESGSLEILQLLLGCHARMER, and YGMTPLLAASVTGHTNIVEYLIQEQPGHEQ. Ser108 bears the Phosphoserine mark. Positions 242–265 are disordered; that stretch reads EQLSGTELPGEGSSQVAGNHCSTP. Residues 253–263 are compositionally biased toward polar residues; that stretch reads GSSQVAGNHCS. TPR repeat units lie at residues 283 to 317 and 375 to 408; these read VEALELLGATYVDKKRDLLGALKHWRRAMELRHQG and SYYIRYRGAVYADSGNFERCIRLWKYALDMQQNN. ANK repeat units follow at residues 519–561 and 565–594; these read NGFT…DPDS and DNNTPLHIAAQNNCPAIMDALIEAGAHMDA. At Ser608 the chain carries Phosphoserine.

The protein belongs to the fem-1 family. Component of a CRL2 E3 ubiquitin-protein ligase complex, also named ECS (Elongin BC-CUL2/5-SOCS-box protein) complex, composed of CUL2, Elongin BC (ELOB and ELOC), RBX1 and substrate-specific adapter FEM1A. Interacts with PTGER4. Interacts with NFKB1; the interaction is direct. Post-translationally, phosphorylated; highly phosphorylated in myoblasts and myotubes. Phosphorylation at Ser-108 and Ser-608 promote PGE2-EP4-mediated inhibition of inflammation. Dephosphorylated by protein phosphatase 2A (PP2A). In terms of tissue distribution, preferentially expressed in cardiac muscle, brain and liver (at protein level). Also expressed in skeletal muscle.

It localises to the mitochondrion. Its subcellular location is the cytoplasm. It functions in the pathway protein modification; protein ubiquitination. Substrate-recognition component of a Cul2-RING (CRL2) E3 ubiquitin-protein ligase complex of the DesCEND (destruction via C-end degrons) pathway, which recognizes a C-degron located at the extreme C terminus of target proteins, leading to their ubiquitination and degradation. The C-degron recognized by the DesCEND pathway is usually a motif of less than ten residues and can be present in full-length proteins, truncated proteins or proteolytically cleaved forms. The CRL2(FEM1A) complex specifically recognizes proteins with an arginine at the C-terminus: recognizes and binds proteins ending with -Lys/Arg-Xaa-Arg and -Lys/Arg-Xaa-Xaa-Arg C-degrons, such as SIL1 or OR51B2, leading to their ubiquitination and degradation. Involved in PGE2-EP4-mediated inhibition of inflammation of macrophages via interaction with NFKB1 and PTGER4. Promotes inflammation in brain microglia through MAP2K4/MKK4-mediated signaling. This Mus musculus (Mouse) protein is Protein fem-1 homolog A-A.